The following is a 621-amino-acid chain: Intermediate filament protein ifc-2 (621 aa).

The head stretch occupies residues 20 to 55; that stretch reads SGAYTSGFGGLVSGMSSAGAICTTQIRDAREREKRE. Residues 52-400 form the IF rod domain; it reads EKREIGLLND…VLLNGANVTT (349 aa). Residues 56 to 87 form a coil 1A region; the sequence is IGLLNDRLADYIEKVRFLEAQNQCLSHDIDIL. A linker 1 region spans residues 88–100; the sequence is RRGFSGGGHVSGL. Positions 101–238 are coil 1B; it reads YDTEIAQAKR…TENSTRIEQE (138 aa). The interval 239–256 is linker 12; that stretch reads LVFIRRDTTAENRDYFRH. A coil 2 region spans residues 257–400; sequence ELQAAIRDIR…VLLNGANVTT (144 aa). The interval 401 to 549 is tail; the sequence is YVSNTHPSGV…RVDVGGFRVE (149 aa). The region spanning 508 to 621 is the LTD domain; the sequence is SGRSFHSWYL…EERAWFVYLN (114 aa).

This sequence belongs to the intermediate filament family.

The protein resides in the cytoplasm. In terms of biological role, cytoplasmic intermediate filaments provide mechanical strength to cells. The chain is Intermediate filament protein ifc-2 from Caenorhabditis briggsae.